We begin with the raw amino-acid sequence, 340 residues long: Ketol-acid reductoisomerase (NADP(+)) (340 aa).

Positions 1–183 (MAITVYYDKD…GGGRTGIIET (183 aa)) constitute a KARI N-terminal Rossmann domain. Residues 26–29 (FGSQ), R49, S52, S54, and 84–87 (DEIQ) contribute to the NADP(+) site. The active site involves H109. G135 contributes to the NADP(+) binding site. The KARI C-terminal knotted domain maps to 184–329 (TFKAETETDL…RNLRAMMPWI (146 aa)). Residues D192, E196, E228, and E232 each contribute to the Mg(2+) site. S253 contributes to the substrate binding site.

The protein belongs to the ketol-acid reductoisomerase family. It depends on Mg(2+) as a cofactor.

It catalyses the reaction (2R)-2,3-dihydroxy-3-methylbutanoate + NADP(+) = (2S)-2-acetolactate + NADPH + H(+). The enzyme catalyses (2R,3R)-2,3-dihydroxy-3-methylpentanoate + NADP(+) = (S)-2-ethyl-2-hydroxy-3-oxobutanoate + NADPH + H(+). It participates in amino-acid biosynthesis; L-isoleucine biosynthesis; L-isoleucine from 2-oxobutanoate: step 2/4. It functions in the pathway amino-acid biosynthesis; L-valine biosynthesis; L-valine from pyruvate: step 2/4. Functionally, involved in the biosynthesis of branched-chain amino acids (BCAA). Catalyzes an alkyl-migration followed by a ketol-acid reduction of (S)-2-acetolactate (S2AL) to yield (R)-2,3-dihydroxy-isovalerate. In the isomerase reaction, S2AL is rearranged via a Mg-dependent methyl migration to produce 3-hydroxy-3-methyl-2-ketobutyrate (HMKB). In the reductase reaction, this 2-ketoacid undergoes a metal-dependent reduction by NADPH to yield (R)-2,3-dihydroxy-isovalerate. This is Ketol-acid reductoisomerase (NADP(+)) from Campylobacter jejuni (strain RM1221).